The primary structure comprises 298 residues: Tyrosine recombinase XerC (298 aa).

The region spanning 2–88 is the Core-binding (CB) domain; that stretch reads TDLHTDVERY…ALRSFFDWLV (87 aa). The region spanning 109 to 288 is the Tyr recombinase domain; it reads HLPKNIDVDD…DFQHLASVYD (180 aa). Catalysis depends on residues Arg148, Lys172, His240, Arg243, and His266. Tyr275 serves as the catalytic O-(3'-phospho-DNA)-tyrosine intermediate.

The protein belongs to the 'phage' integrase family. XerC subfamily. As to quaternary structure, forms a cyclic heterotetrameric complex composed of two molecules of XerC and two molecules of XerD, in which XerC interacts with XerD via its C-terminal region, XerD interacts with XerC via its C-terminal region and so on.

It localises to the cytoplasm. With respect to regulation, ftsK may regulate the catalytic switch between XerC and XerD in the heterotetrameric complex during the two steps of the recombination process. Functionally, site-specific tyrosine recombinase, which acts by catalyzing the cutting and rejoining of the recombining DNA molecules. Binds cooperatively to specific DNA consensus sequences that are separated from XerD binding sites by a short central region, forming the heterotetrameric XerC-XerD complex that recombines DNA substrates. The complex is essential to convert dimers of the bacterial chromosome into monomers to permit their segregation at cell division. It also contributes to the segregational stability of plasmids. In the complex XerC specifically exchanges the top DNA strands. This chain is Tyrosine recombinase XerC, found in Escherichia coli O127:H6 (strain E2348/69 / EPEC).